The sequence spans 365 residues: Transcription factor KUA1 (365 aa).

The disordered stretch occupies residues M1–R21. The CCHC-type zinc finger occupies R3–N20. Over residues C8–C18 the composition is skewed to polar residues. The short motif at K24–V28 is the R/KLFGV (transcriptional repression) element. Residues M41–T99 form a disordered region. One can recognise an HTH myb-type domain in the interval R90 to S146. A DNA-binding region (H-T-H motif) is located at residues W118–F142. Disordered stretches follow at residues S214 to L254 and E321 to L365. Over residues S220 to L254 the composition is skewed to low complexity. A compositionally biased stretch (polar residues) spans R343–S355.

As to expression, expressed ubiquitously, except in hypocotyls, root tips and lateral root primordia.

The protein localises to the nucleus. Its function is as follows. Transcriptional repressor. Direct regulator of the transcription of peroxidase (Prxs) and reactive oxygen species (ROS)-related genes via the recognition of 5'-ATCACA-3' motif. Binds to 5'-TATCCA-3' motif (TA box) and represses the activity of corresponding promoters (e.g. sugar response genes). Regulates hypocotyl elongation in response to darkness by enhancing auxin accumulation in a phytochrome-interacting factor (PIF) proteins-dependent manner. Promotes lateral roots formation. Promotes cell expansion during leaves development via the modulation of cell wall-located Prxs. Plays a critical role in developmentally regulated and dark-induced onset of leaf senescence by repressing the transcription of several genes involved in chloroplast function and responses to light and auxin. Promotes responses to auxin, abscisic acid (ABA), and ethylene. This Arabidopsis thaliana (Mouse-ear cress) protein is Transcription factor KUA1.